The sequence spans 281 residues: uncharacterized protein (281 aa).

Transmembrane regions (helical) follow at residues 30–50, 54–74, 76–96, 106–126, 153–173, 198–218, 235–255, and 259–279; these read AIVA…FIVI, VFIS…GYYF, FNPL…MGWV, TLIG…IDLT, AGLD…FLAI, IALT…IALL, MMAV…ALSY, and LSSG…SLAF.

Belongs to the ABC-3 integral membrane protein family.

The protein localises to the cell membrane. This is an uncharacterized protein from Synechocystis sp. (strain ATCC 27184 / PCC 6803 / Kazusa).